A 120-amino-acid polypeptide reads, in one-letter code: MTHDVSKYALGRIAEDKACNYLSVNGYIVLDRNWYCRFGELDIIARKNGVIVAVEVKGGKRNADYPICNITVKKLSKLTFLLKAWLHENKLNEFCIDLRIDAVSVTFIPELQIRHFVGIL.

Belongs to the UPF0102 family.

The protein is UPF0102 protein TW312 of Tropheryma whipplei (strain TW08/27) (Whipple's bacillus).